The chain runs to 147 residues: MVHLTDAEKATVSGLWGKVNADNVGAEALGRLLVVYPWTQRYFSKFGDLSSASAIMGNPQVKAHGKKVINAFNDGLKHLDNLKGTFAHLSELHCDKLHVDPENFRLLGNMIVIVLGHHLGKEFTPCAQAAFQKVVAGVASALAHKYH.

An N-acetylvaline modification is found at V2. Residues 3–147 (HLTDAEKATV…VASALAHKYH (145 aa)) form the Globin domain. S13 is subject to Phosphoserine. K18 is subject to N6-succinyllysine. 2 positions are modified to phosphoserine: S51 and S53. 2 residues coordinate heme b: H64 and H93. R105 is modified (asymmetric dimethylarginine). At T124 the chain carries Phosphothreonine. C126 is modified (phosphoserine; in variant Ser-126).

It belongs to the globin family. In terms of assembly, heterotetramer of two alpha chains and two beta chains. Red blood cells.

In terms of biological role, involved in oxygen transport from the lung to the various peripheral tissues. The polypeptide is Hemoglobin subunit beta-2 (Rattus norvegicus (Rat)).